A 169-amino-acid chain; its full sequence is Succinate dehydrogenase cytochrome b560 subunit, mitochondrial (169 aa).

The transit peptide at 1 to 29 (MAALLLRHVGRHCLRAHLSPQLCIRNAVP) directs the protein to the mitochondrion. Residues 30 to 62 (LGTTAKEEMERFWSKNTTLNRPLSPHISIYGWS) are Mitochondrial matrix-facing. A helical transmembrane segment spans residues 63–92 (LPMAMSICHRGTGIALSAGVSLFGLSALLV). Residues 93 to 112 (PGSFESHLEFVKSLCLGPAL) are Mitochondrial intermembrane-facing. Residues 113–137 (IHTAKFALVFPLMYHTWNGIRHLMW) form a helical membrane-spanning segment. His-127 provides a ligand contact to heme b. At 138–144 (DLGKGLT) the chain is on the mitochondrial matrix side. Residues 145–166 (ISQLHQSGVAVLVLTVLSSVGL) traverse the membrane as a helical segment. At 167 to 169 (AAM) the chain is on the mitochondrial intermembrane side.

Belongs to the cytochrome b560 family. As to quaternary structure, component of complex II composed of four subunits: the flavoprotein (FP) SDHA, iron-sulfur protein (IP) SDHB, and a cytochrome b560 composed of SDHC and SDHD. Requires heme b as cofactor. Post-translationally, the N-terminus is blocked.

It is found in the mitochondrion inner membrane. It functions in the pathway carbohydrate metabolism; tricarboxylic acid cycle. Functionally, membrane-anchoring subunit of succinate dehydrogenase (SDH) that is involved in complex II of the mitochondrial electron transport chain and is responsible for transferring electrons from succinate to ubiquinone (coenzyme Q). SDH also oxidizes malate to the non-canonical enol form of oxaloacetate, enol-oxaloacetate. Enol-oxaloacetate, which is a potent inhibitor of the succinate dehydrogenase activity, is further isomerized into keto-oxaloacetate. This is Succinate dehydrogenase cytochrome b560 subunit, mitochondrial (SDHC) from Bos taurus (Bovine).